Reading from the N-terminus, the 431-residue chain is Histidinol dehydrogenase (431 aa).

NAD(+) is bound by residues Tyr127, Gln189, and Asn212. Positions 237, 259, and 262 each coordinate substrate. Residues Gln259 and His262 each contribute to the Zn(2+) site. Residues Glu326 and His327 each act as proton acceptor in the active site. Positions 327, 360, 414, and 419 each coordinate substrate. Asp360 contacts Zn(2+). A Zn(2+)-binding site is contributed by His419.

The protein belongs to the histidinol dehydrogenase family. The cofactor is Zn(2+).

It catalyses the reaction L-histidinol + 2 NAD(+) + H2O = L-histidine + 2 NADH + 3 H(+). The protein operates within amino-acid biosynthesis; L-histidine biosynthesis; L-histidine from 5-phospho-alpha-D-ribose 1-diphosphate: step 9/9. Its function is as follows. Catalyzes the sequential NAD-dependent oxidations of L-histidinol to L-histidinaldehyde and then to L-histidine. This chain is Histidinol dehydrogenase, found in Xylella fastidiosa (strain Temecula1 / ATCC 700964).